We begin with the raw amino-acid sequence, 376 residues long: Pre-mRNA-splicing factor cwf25 (376 aa).

Positions 25 to 60 (KDEQAHKEEMKRVEQLRREIEEERQLLELHRLQEAA) form a coiled coil. 2 disordered regions span residues 153–211 (LMEK…DRNN) and 258–289 (RTSR…ITQR). Positions 154 to 167 (MEKRKYSLDSDRKS) are enriched in basic and acidic residues. Over residues 168–178 (KERRHRDRHHR) the composition is skewed to basic residues. Over residues 179 to 199 (SNQDRSRERSDNEQHSSDKRE) the composition is skewed to basic and acidic residues. Phosphoserine occurs at positions 266 and 268. A coiled-coil region spans residues 286–334 (ITQRHTDIESRLQKMQDNAKELDESRRKKIELLEKKERDEEQFLEKERR).

Belongs to the CWC25 family. As to quaternary structure, belongs to the 40S cdc5-associated complex (or cwf complex), a spliceosome sub-complex reminiscent of a late-stage spliceosome composed of the U2, U5 and U6 snRNAs and at least brr2, cdc5, cwf2/prp3, cwf3/syf1, cwf4/syf3, cwf5/ecm2, spp42/cwf6, cwf7/spf27, cwf8, cwf9, cwf10, cwf11, cwf12, prp45/cwf13, cwf14, cwf15, cwf16, cwf17, cwf18, cwf19, cwf20, cwf21, cwf22, cwf23, cwf24, cwf25, cwf26, cyp7/cwf27, cwf28, cwf29/ist3, lea1, msl1, prp5/cwf1, prp10, prp12/sap130, prp17, prp22, sap61, sap62, sap114, sap145, slu7, smb1, smd1, smd3, smf1, smg1 and syf2.

It is found in the nucleus. Its function is as follows. Involved in mRNA splicing. This Schizosaccharomyces pombe (strain 972 / ATCC 24843) (Fission yeast) protein is Pre-mRNA-splicing factor cwf25 (cwf25).